Reading from the N-terminus, the 770-residue chain is Disabled homolog 2 (770 aa).

Residues 1 to 16 are compositionally biased toward polar residues; that stretch reads MSNEVETSATNGQPDQ. The tract at residues 1-38 is disordered; the sequence is MSNEVETSATNGQPDQQAAPKAPSKKEKKKGPEKTDEY. Ser-2 is modified (N-acetylserine). Ser-2 carries the post-translational modification Phosphoserine. Residues 45–196 enclose the PID domain; sequence GDGVKYKAKL…KAVENGSEAL (152 aa). Residue Tyr-170 is modified to Phosphotyrosine. Ser-193 bears the Phosphoserine mark. The required for localization to clathrin-coated pits stretch occupies residues 230-447; that stretch reads ESKDILLVDL…KPGRGRRTAK (218 aa). Disordered stretches follow at residues 284-482 and 604-629; these read LNFF…LQPN and VSTQ…AGPP. 2 consecutive short sequence motifs (DPF) follow at residues 293-295 and 298-300; these read DPF. Over residues 302-313 the composition is skewed to polar residues; the sequence is QPDQSTPSSFDS. Residues Ser-326 and Ser-328 each carry the phosphoserine; in mitosis modification. Positions 366 to 396 are enriched in polar residues; the sequence is FSSSQTQPAVRTQNGVSEREQNGFSVKSSPN. Position 401 is a phosphoserine (Ser-401). 3 stretches are compositionally biased toward polar residues: residues 407–425, 466–480, and 604–616; these read SIQN…SSPH, PSGQ…TALQ, and VSTQ…SSLL. Residues 604 to 732 are sufficient for interaction with GRB2; the sequence is VSTQPPSMHS…SLPVTKSTDN (129 aa). The required for interaction with CSK stretch occupies residues 619–627; the sequence is PPQPPPRAG. The segment at 649-770 is required for interaction with MYO6; that stretch reads KDVKEMFKDF…YRDPFGNPFA (122 aa). Residues 663-671 form a required for interaction with GRB2 and CSK region; it reads PPAVPARKG. 3 positions are modified to phosphoserine: Ser-675, Ser-723, and Ser-729. The sufficient for interaction with SH3KBP1 SH3 domain stretch occupies residues 709–725; the sequence is NKINEPPKPAPRQVSLP. Positions 742–770 are disordered; the sequence is SFGSSQASVASSQPVSSEMYRDPFGNPFA. Residues 745-758 show a composition bias toward low complexity; it reads SSQASVASSQPVSS.

Interacts (via NPXY motif) with DAB2 (via PID domain). Can interact (via PID domain) with LDLR, APP, APLP1 and APLP2, and weakly with INPP5D (via NPXY motifs); the interaction is impaired by tyrosine phosphorylation of the respective NPXY motifs. Can weakly interact (via PID domain) with LRP1 (via NPXY motif); the interaction is enhanced by tyrosine phosphorylation of the NPXY motif. Interacts with LRP2 (via NPXY motif); the interaction is not affected by tyrosine phosphorylation of the NPXY motif. Interacts with clathrin; in vitro can assemble clathrin triskelia into polyhedral coats. Interacts with AP2A2, ITGB1, ITGB3, ITGB5, PIAS2, DAB2IP, NOSTRIN, FCHO1, DVL3, EPS15, ITSN1 and EPS15L1. Interacts with SH3KBP1 (via SH3 domains). Interacts with GRB2; competes with SOS1 for binding to GRB2 and the interaction is enhanced by EGF and NT-3 stimulation. Interacts with MAP3K7; the interaction is induced by TGF-beta stimulation and may mediate TGF-beta stimulated JNK activation. Interacts with AXIN1 and PPP1CA; the interactions are mutually exclusive. Interacts with the globular tail of MYO6. Interacts (via DPF motifs) with FCHO2; the interaction is direct and required for DAB2-mediated LDLR endocytosis. Interacts with LRP6; the interaction involves LRP6 phosphorylation by CK2 and sequesters LRP6 towards clathrin-mediated endocytosis. Associates with the TGF-beta receptor complex. Interacts with SMAD2 and SMAD3; the interactions are enhanced upon TGF-beta stimulation. Interacts with GRB2; the interaction is enhanced by EGF and NT-3 stimulation. Interacts with SRC; the interaction is enhanced by EGF stimulation. Phosphorylated. Phosphorylation during mitosis is leading to membrane displacement. Expressed in deep invaginations, inclusion cysts and the surface epithelial cells of the ovary. Also expressed in breast epithelial cells, spleen, thymus, prostate, testis, macrophages, fibroblasts, lung epithelial cells, placenta, brain stem, heart and small intestine. Expressed in kidney proximal tubular epithelial cells (at protein level).

The protein resides in the cytoplasm. Its subcellular location is the cytoplasmic vesicle. The protein localises to the clathrin-coated vesicle membrane. It localises to the membrane. It is found in the clathrin-coated pit. Adapter protein that functions as a clathrin-associated sorting protein (CLASP) required for clathrin-mediated endocytosis of selected cargo proteins. Can bind and assemble clathrin, and binds simultaneously to phosphatidylinositol 4,5-bisphosphate (PtdIns(4,5)P2) and cargos containing non-phosphorylated NPXY internalization motifs, such as the LDL receptor, to recruit them to clathrin-coated pits. Can function in clathrin-mediated endocytosis independently of the AP-2 complex. Involved in endocytosis of integrin beta-1; this function seems to redundant with the AP-2 complex and seems to require DAB2 binding to endocytosis accessory EH domain-containing proteins such as EPS15, EPS15L1 and ITSN1. Involved in endocytosis of cystic fibrosis transmembrane conductance regulator/CFTR. Involved in endocytosis of megalin/LRP2 lipoprotein receptor during embryonal development. Required for recycling of the TGF-beta receptor. Involved in CFTR trafficking to the late endosome. Involved in several receptor-mediated signaling pathways. Involved in TGF-beta receptor signaling and facilitates phosphorylation of the signal transducer SMAD2. Mediates TFG-beta-stimulated JNK activation. May inhibit the canoniocal Wnt/beta-catenin signaling pathway by stabilizing the beta-catenin destruction complex through a competing association with axin preventing its dephosphorylation through protein phosphatase 1 (PP1). Sequesters LRP6 towards clathrin-mediated endocytosis, leading to inhibition of Wnt/beta-catenin signaling. May activate non-canonical Wnt signaling. In cell surface growth factor/Ras signaling pathways proposed to inhibit ERK activation by interrupting the binding of GRB2 to SOS1 and to inhibit SRC by preventing its activating phosphorylation at 'Tyr-419'. Proposed to be involved in modulation of androgen receptor (AR) signaling mediated by SRC activation; seems to compete with AR for interaction with SRC. Plays a role in the CSF-1 signal transduction pathway. Plays a role in cellular differentiation. Involved in cell positioning and formation of visceral endoderm (VE) during embryogenesis and proposed to be required in the VE to respond to Nodal signaling coming from the epiblast. Required for the epithelial to mesenchymal transition, a process necessary for proper embryonic development. May be involved in myeloid cell differentiation and can induce macrophage adhesion and spreading. May act as a tumor suppressor. This chain is Disabled homolog 2 (DAB2), found in Homo sapiens (Human).